The chain runs to 107 residues: uncharacterized protein (107 aa).

2 disordered regions span residues 51–75 and 88–107; these read VQRS…TQSA and NPTP…APEP. Residues 63-75 are compositionally biased toward polar residues; the sequence is NGNQGSAIPTQSA.

This is an uncharacterized protein from Fowl adenovirus A serotype 1 (strain CELO / Phelps) (FAdV-1).